We begin with the raw amino-acid sequence, 140 residues long: Large ribosomal subunit protein uL16 (140 aa).

It belongs to the universal ribosomal protein uL16 family. As to quaternary structure, part of the 50S ribosomal subunit.

Functionally, binds 23S rRNA and is also seen to make contacts with the A and possibly P site tRNAs. This Malacoplasma penetrans (strain HF-2) (Mycoplasma penetrans) protein is Large ribosomal subunit protein uL16.